Reading from the N-terminus, the 261-residue chain is 4-hydroxy-tetrahydrodipicolinate reductase (261 aa).

Residue 8–13 (GYKGRM) coordinates NAD(+). R36 lines the NADP(+) pocket. NAD(+) is bound by residues 95-97 (GTT) and 121-124 (APNF). The Proton donor/acceptor role is filled by H151. Position 152 (H152) interacts with (S)-2,3,4,5-tetrahydrodipicolinate. The Proton donor role is filled by K155. 161–162 (GT) contributes to the (S)-2,3,4,5-tetrahydrodipicolinate binding site.

This sequence belongs to the DapB family.

The protein localises to the cytoplasm. The catalysed reaction is (S)-2,3,4,5-tetrahydrodipicolinate + NAD(+) + H2O = (2S,4S)-4-hydroxy-2,3,4,5-tetrahydrodipicolinate + NADH + H(+). It carries out the reaction (S)-2,3,4,5-tetrahydrodipicolinate + NADP(+) + H2O = (2S,4S)-4-hydroxy-2,3,4,5-tetrahydrodipicolinate + NADPH + H(+). It functions in the pathway amino-acid biosynthesis; L-lysine biosynthesis via DAP pathway; (S)-tetrahydrodipicolinate from L-aspartate: step 4/4. Functionally, catalyzes the conversion of 4-hydroxy-tetrahydrodipicolinate (HTPA) to tetrahydrodipicolinate. In Lactiplantibacillus plantarum (strain ATCC BAA-793 / NCIMB 8826 / WCFS1) (Lactobacillus plantarum), this protein is 4-hydroxy-tetrahydrodipicolinate reductase.